The sequence spans 192 residues: Probable GTP-binding protein EngB (192 aa).

An EngB-type G domain is found at 22–192; that stretch reads NLPQIVIVGR…QVLSIFEKYA (171 aa). GTP is bound by residues 30 to 37, 57 to 61, 75 to 78, 142 to 145, and 173 to 175; these read GRSNVGKS, GKTRG, DLPG, TKAD, and FSA. 2 residues coordinate Mg(2+): serine 37 and threonine 59.

Belongs to the TRAFAC class TrmE-Era-EngA-EngB-Septin-like GTPase superfamily. EngB GTPase family. The cofactor is Mg(2+).

Necessary for normal cell division and for the maintenance of normal septation. In Thermoanaerobacter pseudethanolicus (strain ATCC 33223 / 39E) (Clostridium thermohydrosulfuricum), this protein is Probable GTP-binding protein EngB.